The sequence spans 374 residues: P2Y purinoceptor 2 (374 aa).

At 1 to 32 (MAAGLDSWNSTINGTWEGDELGYKCRFNEDFK) the chain is on the extracellular side. 2 N-linked (GlcNAc...) asparagine glycosylation sites follow: Asn-9 and Asn-13. A helical membrane pass occupies residues 33–59 (YVLLPVSYGVVCVLGLCLNVVALYIFL). Over 60–70 (CRLKTWNASTT) the chain is Cytoplasmic. Residues 71–93 (YMFHLAVSDSLYAASLPLLVYYY) form a helical membrane-spanning segment. At 94 to 110 (AQGDHWPFSTVLCKLVR) the chain is on the extracellular side. Cys-106 and Cys-183 are joined by a disulfide. The chain crosses the membrane as a helical span at residues 111–129 (FLFYTNLYCSILFLTCISV). Residues 130-152 (HRCLGVLRPLHSLSWGHARYARR) are Cytoplasmic-facing. The chain crosses the membrane as a helical span at residues 153 to 172 (VAAVVWVLVLACQAPVLYFV). At 173-194 (TTSVRGTRITCHDTSARELFSH) the chain is on the extracellular side. The chain crosses the membrane as a helical span at residues 195 to 220 (FVAYSSVMLGLLFAVPFSIILVCYVL). Residues 221-245 (MARRLLKPAYGTTGLPRAKRKSVRT) are Cytoplasmic-facing. Residues 246–268 (IALVLAVFALCFLPFHVTRTLYY) traverse the membrane as a helical segment. The Extracellular segment spans residues 269-286 (SFRSLDLSCHTLNAINMA). A helical membrane pass occupies residues 287-308 (YKITRPLASANSCLDPVLYFLA). Over 309 to 374 (GQRLVRFARD…AGSETKDIRL (66 aa)) the chain is Cytoplasmic. Residues 318-374 (DAKPATEPTPSPQARRKLGLHRPNRTDTVRKDLSISSDDSRRTESTPAGSETKDIRL) are disordered. A compositionally biased stretch (basic residues) spans 331–340 (ARRKLGLHRP). Basic and acidic residues predominate over residues 341 to 361 (NRTDTVRKDLSISSDDSRRTE).

It belongs to the G-protein coupled receptor 1 family.

The protein localises to the cell membrane. In terms of biological role, receptor for ATP and UTP coupled to G-proteins that activate a phosphatidylinositol-calcium second messenger system. The affinity range is UTP = ATP &gt; ATP-gamma-S &gt;&gt; 2-methylthio-ATP = ADP. The protein is P2Y purinoceptor 2 (P2ry2) of Rattus norvegicus (Rat).